The chain runs to 195 residues: Recombination protein RecR (195 aa).

A C4-type zinc finger spans residues 56–71 (CRQCHSFSDDDICPIC). Residues 79–174 (SVLCVVETAA…KVTRIAQGIP (96 aa)) enclose the Toprim domain.

Belongs to the RecR family.

May play a role in DNA repair. It seems to be involved in an RecBC-independent recombinational process of DNA repair. It may act with RecF and RecO. This Psychrobacter sp. (strain PRwf-1) protein is Recombination protein RecR.